Reading from the N-terminus, the 66-residue chain is Photosystem II reaction center protein H (66 aa).

Residues P29–Y49 form a helical membrane-spanning segment.

It belongs to the PsbH family. As to quaternary structure, PSII is composed of 1 copy each of membrane proteins PsbA, PsbB, PsbC, PsbD, PsbE, PsbF, PsbH, PsbI, PsbJ, PsbK, PsbL, PsbM, PsbT, PsbX, PsbY, PsbZ, Psb30/Ycf12, at least 3 peripheral proteins of the oxygen-evolving complex and a large number of cofactors. It forms dimeric complexes.

Its subcellular location is the plastid. It is found in the chloroplast thylakoid membrane. In terms of biological role, one of the components of the core complex of photosystem II (PSII), required for its stability and/or assembly. PSII is a light-driven water:plastoquinone oxidoreductase that uses light energy to abstract electrons from H(2)O, generating O(2) and a proton gradient subsequently used for ATP formation. It consists of a core antenna complex that captures photons, and an electron transfer chain that converts photonic excitation into a charge separation. The sequence is that of Photosystem II reaction center protein H from Thalassiosira pseudonana (Marine diatom).